A 151-amino-acid chain; its full sequence is Deoxyuridine 5'-triphosphate nucleotidohydrolase (151 aa).

Substrate-binding positions include 69 to 71 (RSG), N82, 86 to 88 (LID), and M96.

It belongs to the dUTPase family. Mg(2+) is required as a cofactor.

The enzyme catalyses dUTP + H2O = dUMP + diphosphate + H(+). It functions in the pathway pyrimidine metabolism; dUMP biosynthesis; dUMP from dCTP (dUTP route): step 2/2. Its function is as follows. This enzyme is involved in nucleotide metabolism: it produces dUMP, the immediate precursor of thymidine nucleotides and it decreases the intracellular concentration of dUTP so that uracil cannot be incorporated into DNA. The chain is Deoxyuridine 5'-triphosphate nucleotidohydrolase from Blochmanniella floridana.